The sequence spans 642 residues: ATP-dependent zinc metalloprotease FtsH (642 aa).

Residues 1 to 6 are Cytoplasmic-facing; sequence MGRFTK. A helical transmembrane segment spans residues 7–27; sequence NIVLYLLIIAAFVIAIDAFSG. At 28-101 the chain is on the extracellular side; sequence QSANKSELSY…TAAPPEQPAW (74 aa). A helical membrane pass occupies residues 102 to 122; the sequence is WMSLLGSAIPIIILVVLFFFI. Residues 123–642 are Cytoplasmic-facing; the sequence is MQQTQGGGGR…LSEASSNEIK (520 aa). Residue 194-201 participates in ATP binding; the sequence is GPPGTGKT. A Zn(2+)-binding site is contributed by His-416. Glu-417 is a catalytic residue. Residues His-420 and Asp-492 each contribute to the Zn(2+) site. Residues 597–610 show a composition bias toward basic and acidic residues; that stretch reads TTKEPEAEEPKVAS. Residues 597-642 form a disordered region; it reads TTKEPEAEEPKVASEADSSIVPEGVDAKKTTSTVADLSEASSNEIK. A compositionally biased stretch (polar residues) spans 626–642; sequence TTSTVADLSEASSNEIK.

In the central section; belongs to the AAA ATPase family. It in the C-terminal section; belongs to the peptidase M41 family. Homohexamer. Requires Zn(2+) as cofactor.

The protein resides in the cell membrane. Functionally, acts as a processive, ATP-dependent zinc metallopeptidase for both cytoplasmic and membrane proteins. Plays a role in the quality control of integral membrane proteins. The polypeptide is ATP-dependent zinc metalloprotease FtsH (Veillonella parvula (strain ATCC 10790 / DSM 2008 / CCUG 5123 / JCM 12972 / NCTC 11810 / Te3) (Veillonella alcalescens)).